The primary structure comprises 238 residues: tRNA (guanine-N(7)-)-methyltransferase (238 aa).

Positions 68, 93, 120, and 143 each coordinate S-adenosyl-L-methionine. Residue Asp-143 is part of the active site. Residues Lys-147, Asp-179, and 216–219 each bind substrate; that span reads TKFE.

It belongs to the class I-like SAM-binding methyltransferase superfamily. TrmB family.

It catalyses the reaction guanosine(46) in tRNA + S-adenosyl-L-methionine = N(7)-methylguanosine(46) in tRNA + S-adenosyl-L-homocysteine. The protein operates within tRNA modification; N(7)-methylguanine-tRNA biosynthesis. Catalyzes the formation of N(7)-methylguanine at position 46 (m7G46) in tRNA. This chain is tRNA (guanine-N(7)-)-methyltransferase, found in Shewanella baltica (strain OS223).